The primary structure comprises 325 residues: Ribosomal RNA small subunit methyltransferase H (325 aa).

S-adenosyl-L-methionine-binding positions include 41–43, Asp-60, Tyr-87, Asp-108, and Gln-115; that span reads GGH. Residues 295-325 form a disordered region; the sequence is DDDEKAANPRAAPVRLRAAERTRASEDRRGS. Residues 311–325 show a composition bias toward basic and acidic residues; that stretch reads RAAERTRASEDRRGS.

This sequence belongs to the methyltransferase superfamily. RsmH family.

It is found in the cytoplasm. It carries out the reaction cytidine(1402) in 16S rRNA + S-adenosyl-L-methionine = N(4)-methylcytidine(1402) in 16S rRNA + S-adenosyl-L-homocysteine + H(+). Functionally, specifically methylates the N4 position of cytidine in position 1402 (C1402) of 16S rRNA. The protein is Ribosomal RNA small subunit methyltransferase H of Leifsonia xyli subsp. xyli (strain CTCB07).